The following is a 257-amino-acid chain: Hydroxyacylglutathione hydrolase (257 aa).

Residues H54, H56, D58, H59, H113, D137, and H175 each contribute to the Zn(2+) site.

Belongs to the metallo-beta-lactamase superfamily. Glyoxalase II family. Monomer. Requires Zn(2+) as cofactor.

The catalysed reaction is an S-(2-hydroxyacyl)glutathione + H2O = a 2-hydroxy carboxylate + glutathione + H(+). Its pathway is secondary metabolite metabolism; methylglyoxal degradation; (R)-lactate from methylglyoxal: step 2/2. Thiolesterase that catalyzes the hydrolysis of S-D-lactoyl-glutathione to form glutathione and D-lactic acid. This is Hydroxyacylglutathione hydrolase from Gloeothece citriformis (strain PCC 7424) (Cyanothece sp. (strain PCC 7424)).